The primary structure comprises 541 residues: Presenilin homolog (541 aa).

2 stretches are compositionally biased toward polar residues: residues 1-14 (MAAVNLQASCSSGL) and 43-52 (NNYGSSNQDQ). Disordered stretches follow at residues 1-52 (MAAV…NQDQ) and 69-92 (CGSRPSRLTGGGGGSGGPPTNEME). Topologically, residues 1–106 (MAAVNLQASC…LKYGAQHVIK (106 aa)) are cytoplasmic. A helical transmembrane segment spans residues 107 to 127 (LFVPVSLCMLVVVATINSISF). Residues 128–154 (YNSTDVYLLYTPFHEQSPEPSVKFWSA) are Lumenal-facing. The N-linked (GlcNAc...) asparagine glycan is linked to asparagine 129. The helical transmembrane segment at 155 to 175 (LANSLILMSVVVVMTFLLIVL) threads the bilayer. Over 176 to 182 (YKKRCYR) the chain is Cytoplasmic. A helical transmembrane segment spans residues 183–203 (IIHGWLILSSFMLLFIFTYLY). The Lumenal portion of the chain corresponds to 204 to 216 (LEELLRAYNIPMD). Residues 217-237 (YPTALLIMWNFGVVGMMSIHW) traverse the membrane as a helical segment. At 238-242 (QGPLR) the chain is on the cytoplasmic side. Residues 243–263 (LQQGYLIFVAALMALVFIKYL) form a helical membrane-spanning segment. Topologically, residues 264 to 265 (PE) are lumenal. A helical transmembrane segment spans residues 266-286 (WTAWAVLAAISIWDLIAVLSP). The active site involves aspartate 279. Residues 287 to 453 (RGPLRILVET…QNHPDGQEER (167 aa)) are Cytoplasmic-facing. The tract at residues 320–481 (NTVTPQQSQA…ASSYGDWTTT (162 aa)) is interaction with Mettl2. The span at 327 to 350 (SQATASSSPSSSNSTTTTRATQNS) shows a compositional bias: low complexity. 2 disordered regions span residues 327-379 (SQAT…DGSV) and 421-449 (EVQSTQSGNAQRSNEYRTVTAPDQNHPDG). Composition is skewed to polar residues over residues 361 to 370 (GQRTGNSHPR) and 421 to 443 (EVQSTQSGNAQRSNEYRTVTAPD). The helical transmembrane segment at 454–474 (GIKLGLGDFIFYSVLVGKASS) threads the bilayer. Residue aspartate 461 is part of the active site. At 475–481 (YGDWTTT) the chain is on the lumenal side. A helical transmembrane segment spans residues 482–502 (IACFVAILIGLCLTLLLLAIW). Over 503 to 506 (RKAL) the chain is Cytoplasmic. The short motif at 507–509 (PAL) is the PAL element. Residues 507–527 (PALPISITFGLIFCFATSAVV) constitute an intramembrane region (helical). Topologically, residues 528–541 (KPFMEDLSAKQVFI) are cytoplasmic.

This sequence belongs to the peptidase A22A family. In terms of assembly, homodimer. Component of the gamma-secretase complex, a complex composed of a presenilin (Psn) homodimer, nicastrin (Nct), Aph-1 and Pen-2. Interacts with Mettl2. Isoform 2 shows a better interaction with Mettl2 than isoform 1. Cleaved. The cleavage, which probably takes place between the 6th and the 7th transmembrane regions, may be required for activation of the gamma-secretase activity. As to expression, maternally expressed in nurse and follicle cells. In early embryos, expressed in all or most cells and later increases in CNS and epidermal tissues. In larvae, expression is seen in all imaginal disks, brain and optic lobes. In pupae, expression is seen in eye disk and brain.

It localises to the endoplasmic reticulum membrane. The protein resides in the golgi apparatus membrane. Probable catalytic subunit of the gamma-secretase complex, an endoprotease complex that catalyzes the intramembrane cleavage of integral membrane proteins such as Notch receptor. Required for S3 cleavage of Notch, which releases activated Notch protein from the cell membrane. Involved in the patterning of the optic lobes. The chain is Presenilin homolog (Psn) from Drosophila melanogaster (Fruit fly).